A 318-amino-acid chain; its full sequence is MTEEFRHYTVLLKETVDGLQVKPDGVYVDCTLGGAGHSEYLLTQLNEHGHLYAFDQDQKALAHAKTRLQKYVDKGQVTFIKSNFRNIKEELAEHGVFHVDGILYDLGVSSPQLDEAERGFSYHQDAPLDMRMDQDAPLTAREVVNTYSYSELVKIFFRYGEEKFSKQIAREIERVREKQPIETTGELVEIIKTAIPAPARRKGGHPAKRIFQAIRIAVNDELGAVEESLEQAIDLLAKNGRISVITFHSLEDRIVKTMFKEYSTVQDLPPGIPVVPEEFQPELKVITRKPILPSDSELSENNRSRSAKLRIAEKIKSR.

S-adenosyl-L-methionine-binding positions include 35-37 (AGH), D55, F84, D105, and Q112. The segment at 294–318 (SDSELSENNRSRSAKLRIAEKIKSR) is disordered.

The protein belongs to the methyltransferase superfamily. RsmH family.

The protein resides in the cytoplasm. The catalysed reaction is cytidine(1402) in 16S rRNA + S-adenosyl-L-methionine = N(4)-methylcytidine(1402) in 16S rRNA + S-adenosyl-L-homocysteine + H(+). In terms of biological role, specifically methylates the N4 position of cytidine in position 1402 (C1402) of 16S rRNA. The chain is Ribosomal RNA small subunit methyltransferase H from Enterococcus faecalis (strain ATCC 700802 / V583).